The primary structure comprises 167 residues: MEFAEAKKGKEYRIRNARLTDVDQIIKINRLALPENYPYYFFVEHLKEYEAAFFVAEVDGEVVGYIMPRIEWGFSNLKQLPTLVKKGHVVSIAVLEQYRRLGIGTALLQASMKAMKEVYNAEEVYLEVRVSNSPAINLYKKLGFKEVKVLRHYYADGEDAYLMAAPL.

The region spanning 12–167 (YRIRNARLTD…EDAYLMAAPL (156 aa)) is the N-acetyltransferase domain. Position 37 (tyrosine 37) interacts with substrate. Histidine 88 provides a ligand contact to Zn(2+). Residues 92 to 94 (IAV) and 100 to 105 (RLGIGT) each bind acetyl-CoA. Residue glutamate 127 coordinates Zn(2+). Acetyl-CoA is bound by residues asparagine 132 and 139-141 (YKK). Tyrosine 154 is a substrate binding site.

Belongs to the acetyltransferase family. ARD1 subfamily. Homodimer.

It localises to the cytoplasm. The catalysed reaction is N-terminal L-alanyl-[protein] + acetyl-CoA = N-terminal N(alpha)-acetyl-L-alanyl-[protein] + CoA + H(+). It catalyses the reaction N-terminal L-seryl-[protein] + acetyl-CoA = N-terminal N(alpha)-acetyl-L-seryl-[protein] + CoA + H(+). It carries out the reaction N-terminal L-methionyl-L-leucyl-[protein] + acetyl-CoA = N-terminal N(alpha)-acetyl-L-methionyl-L-leucyl-[protein] + CoA + H(+). The enzyme catalyses N-terminal L-methionyl-L-glutamyl-[protein] + acetyl-CoA = N-terminal N(alpha)-acetyl-L-methionyl-L-glutamyl-[protein] + CoA + H(+). In terms of biological role, displays alpha (N-terminal) acetyltransferase activity. Catalyzes the covalent attachment of an acetyl moiety from acetyl-CoA to the free alpha-amino group at the N-terminus of a protein. The protein is N-alpha-acetyltransferase of Sulfurisphaera tokodaii (strain DSM 16993 / JCM 10545 / NBRC 100140 / 7) (Sulfolobus tokodaii).